Here is a 101-residue protein sequence, read N- to C-terminus: Floral defensin-like protein 2 (101 aa).

Residues 1–25 form the signal peptide; the sequence is MARSICFFAVAILALMLFAAYETEA. Disulfide bonds link cysteine 28–cysteine 74, cysteine 32–cysteine 48, cysteine 39–cysteine 61, cysteine 45–cysteine 68, and cysteine 49–cysteine 70. A propeptide spans 75 to 101 (removed in mature form); it reads ATEEATATLANEVKTMAEALVEEDMME.

It belongs to the DEFL family. In terms of processing, when compared to other plant defensins, the petunia defensins have an additional fifth disulfide bond. Petals.

Its subcellular location is the secreted. It is found in the vacuole. In terms of biological role, plant defense peptide with antifungal activity against F.oxysporum and B.cinerea. The chain is Floral defensin-like protein 2 (D2) from Petunia hybrida (Petunia).